Consider the following 106-residue polypeptide: uncharacterized protein (106 aa).

The next 2 membrane-spanning stretches (helical) occupy residues 25-45 and 62-82; these read VMNV…IHYI and ICFL…NFQG.

Its subcellular location is the membrane. This is an uncharacterized protein from Saccharomyces cerevisiae (strain ATCC 204508 / S288c) (Baker's yeast).